A 178-amino-acid chain; its full sequence is Negative modulator of initiation of replication (178 aa).

The interaction with DNA stretch occupies residues 113-117; sequence RTRVY.

It belongs to the SeqA family. In terms of assembly, homodimer. Polymerizes to form helical filaments.

Its subcellular location is the cytoplasm. In terms of biological role, negative regulator of replication initiation, which contributes to regulation of DNA replication and ensures that replication initiation occurs exactly once per chromosome per cell cycle. Binds to pairs of hemimethylated GATC sequences in the oriC region, thus preventing assembly of replication proteins and re-initiation at newly replicated origins. Repression is relieved when the region becomes fully methylated. This chain is Negative modulator of initiation of replication, found in Photobacterium profundum (strain SS9).